The sequence spans 241 residues: Pre-rRNA-processing protein pno1 (241 aa).

A disordered region spans residues 48 to 71 (APAKTSAEKKRGAKPQMRRVPIPP). T52 bears the Phosphothreonine mark. Residues 162–214 (GDHLSRAIGRIAGQGGKTKFAIENASRTRIVLADSKIHILGGFTNIRIAKDAV) enclose the KH domain.

Belongs to the PNO1 family. As to quaternary structure, component of the small ribosomal subunit, ribosomal RNA processing complex (SSU RRP complex).

It is found in the cytoplasm. It localises to the nucleus. Its subcellular location is the nucleolus. Functionally, required for small ribosomal subunit (SSU) synthesis. Has a role in the processing of early nucleolar and late cytoplasmic pre-RNA species. The chain is Pre-rRNA-processing protein pno1 (rbp28) from Schizosaccharomyces pombe (strain 972 / ATCC 24843) (Fission yeast).